A 521-amino-acid chain; its full sequence is Importin subunit alpha-4 (521 aa).

Residues 1 to 29 are disordered; it reads MAENPGLENHRIKSFKNKGRDVETMRRHR. Ala-2 carries the N-acetylalanine modification. Positions 2 to 58 constitute an IBB domain; sequence AENPGLENHRIKSFKNKGRDVETMRRHRNEVTVELRKNKRDEHLLKKRNVPQEESLE. Positions 18–29 are enriched in basic and acidic residues; that stretch reads KGRDVETMRRHR. The Nuclear localization signal motif lies at 43 to 52; that stretch reads EHLLKKRNVP. Ser-56 and Ser-60 each carry phosphoserine. One copy of the ARM 1; truncated repeat lies at 66–106; that stretch reads FKAQNVTLEAILQNATSDNPVVQLSAVQAARKLLSSDRNPP. ARM repeat units follow at residues 107–149, 150–194, 195–233, 234–278, 279–318, 319–360, 361–400, and 401–443; these read IDDL…TSAQ, TQAV…CRDY, VISL…NKDP, PPPM…EQIQ, MVID…TDEQ, TQVV…NQQQ, VQAV…ISGR, and KDQV…IMAG. An NLS binding site (major) region spans residues 137 to 229; it reads WALTNIASGT…VTWVIVNLCR (93 aa). An NLS binding site (minor) region spans residues 306–394; sequence RAVGNIVTGT…QKEAAWAISN (89 aa). The ARM 10; atypical repeat unit spans residues 447-485; it reads STIAEIIEECGGLEKIEVLQQHENEDIYKLAFEIIDQYF. Position 484 is a phosphotyrosine (Tyr-484).

It belongs to the importin alpha family. In terms of assembly, forms a complex with importin subunit beta-1. Interacts with DDX21. Interacts with NCBP1, NCBP2/CBP20 and NCBP3. Interacts with RCC1. Interacts with ZC3H11A. As to expression, detected more or less in all tissues examined (Ehrlich ascites tumor cells, testis, kidney, spleen, liver, heart, lung, thymus, skeletal muscle, cerebellum and brain (without cerebellum)).

It is found in the cytoplasm. Its subcellular location is the nucleus. In terms of biological role, functions in nuclear protein import as an adapter protein for nuclear receptor KPNB1. Binds specifically and directly to substrates containing either a simple or bipartite NLS motif. Docking of the importin/substrate complex to the nuclear pore complex (NPC) is mediated by KPNB1 through binding to nucleoporin FxFG repeats and the complex is subsequently translocated through the pore by an energy requiring, Ran-dependent mechanism. At the nucleoplasmic side of the NPC, Ran binds to importin-beta and the three components separate and importin-alpha and -beta are re-exported from the nucleus to the cytoplasm where GTP hydrolysis releases Ran from importin. The directionality of nuclear import is thought to be conferred by an asymmetric distribution of the GTP- and GDP-bound forms of Ran between the cytoplasm and nucleus. In vitro, mediates the nuclear import of human cytomegalovirus UL84 by recognizing a non-classical NLS. The protein is Importin subunit alpha-4 (Kpna3) of Mus musculus (Mouse).